A 649-amino-acid chain; its full sequence is Probable ADP-ribosylation factor GTPase-activating protein AGD14 (649 aa).

Residues 12-130 (EKIIRGLMKL…KYAGANDADK (119 aa)) enclose the Arf-GAP domain. The C4-type zinc finger occupies 27–50 (CINCNSLGPQYVCTTFWTFVCMAC). Disordered regions lie at residues 124–159 (GAND…QSPP), 209–279 (FSNE…VRSV), 294–316 (LGEA…SNHV), and 366–391 (FTPA…SAPK). Basic and acidic residues predominate over residues 127-146 (DADKPSKDSQDHVSSEDMTR). Low complexity predominate over residues 150-159 (SYHSYSQSPP). Polar residues-rich tracts occupy residues 248 to 257 (PQFQHSNAPP), 269 to 279 (RTTSSGSVRSV), 300 to 315 (ESRQ…TSNH), and 366 to 385 (FTPA…SRPS).

Functionally, GTPase-activating protein (GAP) for ADP ribosylation factor (ARF). This Arabidopsis thaliana (Mouse-ear cress) protein is Probable ADP-ribosylation factor GTPase-activating protein AGD14 (AGD14).